Here is a 509-residue protein sequence, read N- to C-terminus: UDP-N-acetylmuramoylalanine--D-glutamate ligase (509 aa).

116-122 is an ATP binding site; it reads GTNGKST.

This sequence belongs to the MurCDEF family.

It is found in the cytoplasm. It catalyses the reaction UDP-N-acetyl-alpha-D-muramoyl-L-alanine + D-glutamate + ATP = UDP-N-acetyl-alpha-D-muramoyl-L-alanyl-D-glutamate + ADP + phosphate + H(+). Its pathway is cell wall biogenesis; peptidoglycan biosynthesis. Its function is as follows. Cell wall formation. Catalyzes the addition of glutamate to the nucleotide precursor UDP-N-acetylmuramoyl-L-alanine (UMA). The polypeptide is UDP-N-acetylmuramoylalanine--D-glutamate ligase (Wolbachia pipientis wMel).